The primary structure comprises 713 residues: Putative ERAD-associated E3 ubiquitin-protein ligase component (713 aa).

An N-terminal signal peptide occupies residues M1 to T20. N48 and N123 each carry an N-linked (GlcNAc...) asparagine glycan. Sel1-like repeat units lie at residues P83–Y124 and T125–S160. N-linked (GlcNAc...) asparagine glycosylation occurs at N211. Sel1-like repeat units lie at residues I212 to N248, S280 to H315, I490 to P525, and A527 to T562. N-linked (GlcNAc...) asparagine glycosylation is present at N314. Residues Q621–M655 form a disordered region. Polar residues predominate over residues V631–T652. The helical transmembrane segment at G671–M691 threads the bilayer.

The protein belongs to the sel-1 family.

It localises to the endoplasmic reticulum membrane. Functionally, component of the endoplasmic reticulum quality control (ERQC) system involved in ubiquitin-dependent degradation of missfolded endoplasmic reticulum proteins. This is Putative ERAD-associated E3 ubiquitin-protein ligase component from Schizosaccharomyces pombe (strain 972 / ATCC 24843) (Fission yeast).